A 657-amino-acid chain; its full sequence is Protein FAM200B (657 aa).

Belongs to the FAM200 family.

The protein is Protein FAM200B of Homo sapiens (Human).